The sequence spans 425 residues: Proline--tRNA ligase (425 aa).

It belongs to the class-II aminoacyl-tRNA synthetase family. ProS type 2 subfamily. Homodimer.

The protein localises to the cytoplasm. The enzyme catalyses tRNA(Pro) + L-proline + ATP = L-prolyl-tRNA(Pro) + AMP + diphosphate. Functionally, catalyzes the attachment of proline to tRNA(Pro) in a two-step reaction: proline is first activated by ATP to form Pro-AMP and then transferred to the acceptor end of tRNA(Pro). The sequence is that of Proline--tRNA ligase from Wolbachia sp. subsp. Brugia malayi (strain TRS).